Consider the following 438-residue polypeptide: Trigger factor (438 aa).

Residues 160-245 enclose the PPIase FKBP-type domain; the sequence is DDKVTIDFVG…VKKIQQAELP (86 aa).

Belongs to the FKBP-type PPIase family. Tig subfamily.

The protein resides in the cytoplasm. It catalyses the reaction [protein]-peptidylproline (omega=180) = [protein]-peptidylproline (omega=0). Functionally, involved in protein export. Acts as a chaperone by maintaining the newly synthesized protein in an open conformation. Functions as a peptidyl-prolyl cis-trans isomerase. In Francisella tularensis subsp. novicida (strain U112), this protein is Trigger factor.